The primary structure comprises 299 residues: HTH-type transcriptional regulator CynR (299 aa).

An HTH lysR-type domain is found at 1 to 58; it reads MLSRHINYFLAVAEHGSFTRAASALHVSQPALSQQIRQLEESLGVPLFDRSGRTIRLT. Positions 18-37 form a DNA-binding region, H-T-H motif; it reads FTRAASALHVSQPALSQQIR.

It belongs to the LysR transcriptional regulatory family.

The protein localises to the cytoplasm. Its function is as follows. Positively regulates the cynTSX operon, and negatively regulates its own transcription. Binds specifically to the cynR-cynTSX intergenic region. The sequence is that of HTH-type transcriptional regulator CynR (cynR) from Escherichia coli (strain K12).